Here is a 231-residue protein sequence, read N- to C-terminus: Transmembrane protein 225 (231 aa).

At 1-13 (MVHILVRKVEATN) the chain is on the cytoplasmic side. Residues 14–34 (MFFSSWTLVFLAVGIIIEEWA) traverse the membrane as a helical segment. Residues 35–67 (ELKLGPQKPTITHSPWICCTPLWPSDGLEVIRN) are Extracellular-facing. The chain crosses the membrane as a helical span at residues 68–88 (ILIVVLSLSFMHNLLLGFEFT). Topologically, residues 89–97 (YMIPQTKYT) are cytoplasmic. Residues 98-118 (LIMTACLAFLTGILLLGALLL) traverse the membrane as a helical segment. Residues 119–135 (YHHMLRQGESVYYSSYK) lie on the Extracellular side of the membrane. The helical transmembrane segment at 136–156 (ISWIIFTAYLNVLFLFISGFL) threads the bilayer. The Cytoplasmic portion of the chain corresponds to 157-231 (SLLQYKQPID…IQARRVTWAL (75 aa)). The RVxF motif lies at 225 to 229 (RRVTW).

As to quaternary structure, interacts (via RVxF motif) with PPP1CC.

The protein resides in the cytoplasmic vesicle. The protein localises to the secretory vesicle. Its subcellular location is the acrosome membrane. Probably inhibits protein phosphatase 1 (PP1) in sperm via binding to catalytic subunit PPP1CC. The protein is Transmembrane protein 225 (TMEM225) of Bos taurus (Bovine).